The primary structure comprises 213 residues: Probable anti-sigma-F factor NrsF (213 aa).

Helical transmembrane passes span 27–47, 51–71, 91–111, 126–146, 159–179, and 187–207; these read ALAI…LLQV, LGLA…TCLA, VPAA…FTLI, TWKS…AAVL, LAGF…YCLH, and FIGF…VLLG.

Belongs to the NrsF anti-sigma-F factor family.

The protein resides in the cell inner membrane. In terms of biological role, probably an anti-sigma factor for extracytoplasmic function (ECF) sigma factor sigma-F (SigF), which responds to (hypo)chlorite. ECF sigma factors are held in an inactive form by a cognate anti-sigma factor. In Azospira oryzae (strain ATCC BAA-33 / DSM 13638 / PS) (Dechlorosoma suillum), this protein is Probable anti-sigma-F factor NrsF.